We begin with the raw amino-acid sequence, 257 residues long: Ribonuclease HII (257 aa).

The 188-residue stretch at 70-257 (EFIAGIDEVG…PIKSMVAGGN (188 aa)) folds into the RNase H type-2 domain. A divalent metal cation contacts are provided by D76, E77, and D168.

Belongs to the RNase HII family. Mn(2+) is required as a cofactor. It depends on Mg(2+) as a cofactor.

It is found in the cytoplasm. It carries out the reaction Endonucleolytic cleavage to 5'-phosphomonoester.. In terms of biological role, endonuclease that specifically degrades the RNA of RNA-DNA hybrids. This is Ribonuclease HII from Streptococcus suis (strain 98HAH33).